The following is a 459-amino-acid chain: DnaJ homolog subfamily A member 1 homolog (459 aa).

Positions 6 to 73 constitute a J domain; sequence EYYERLGVKP…EKRKMYDSYG (68 aa). A CR-type zinc finger spans residues 158–243; the sequence is GKLVKISISR…CKGKRVIQGK (86 aa). The Zn(2+) site is built by Cys171, Cys174, Cys188, Cys191, Cys215, Cys218, Cys231, and Cys234. 4 CXXCXGXG motif repeats span residues 171 to 178, 188 to 195, 215 to 222, and 231 to 238; these read CKTCKGSG, CPTCNGSR, CHTCHGTG, and CKECKGKR. Residues 405 to 459 are disordered; it reads NTNEQSSHGGAGGAYQQHGGAYGHQKQQQQGFNPADFGAQFGGGGPQQAQQCQQQ. Residues 418–435 are compositionally biased toward low complexity; sequence AYQQHGGAYGHQKQQQQG. Cys456 carries the cysteine methyl ester modification. A lipid anchor (S-farnesyl cysteine) is attached at Cys456. A propeptide spans 457 to 459 (removed in mature form); sequence QQQ.

The protein resides in the membrane. The protein localises to the cytoplasm. It is found in the microsome. It localises to the mitochondrion. Its subcellular location is the nucleus. The protein resides in the perinuclear region. Functionally, co-chaperone for Hsp70 family members. Plays a role in protein transport into mitochondria and in the regulation of apoptosis via its role as co-chaperone. The sequence is that of DnaJ homolog subfamily A member 1 homolog (dnaja1) from Dictyostelium discoideum (Social amoeba).